The chain runs to 113 residues: Meiotically up-regulated gene 98 protein, mitochondrial (113 aa).

The protein localises to the mitochondrion. Its function is as follows. Has a role in meiosis. This chain is Meiotically up-regulated gene 98 protein, mitochondrial (mug98), found in Schizosaccharomyces pombe (strain 972 / ATCC 24843) (Fission yeast).